Reading from the N-terminus, the 608-residue chain is MKTPAWSRLAGYAWGVLLWNVLVALFGAYVRATGSGAGCGAHWPTCNGEVIPRAPQVETLIEFTHRATSGLAFLSVLALFLWALRAFPKGHPARFGAGLALFFMVTESLVGASLVLFGWTADNVSRERAVVQMVHLANTYFLLAALALTAWWASGGGPLRLRGQGAVGLALFLGLLALLFLGMSGAVTALGDLLFPVGSTLEALERSLTPGEHFLVRLRVLHPLIAVSVGLYVVFAGYLVAHLRPSPLTRRLAQGLAYLYGAQLLAGLINVALKAPVWMQILHLLLAYAIWLLFVFLATSALERGAKRVELGEGGEAVHRGTGGATWRDYLALTKPRVISLLLFTALFGALIAAKGWPGLGVFLAVALGGYMMAGAANAINMVVDRDIDARMKRTAKRPTVTQRVSSRDALLFAFALAVLGFAVLWWGANLLAATLALMGLIWYVLVYTLYLKRRTWHNIVIGGAAGAFPPLVGWAAVTGELSLFAWYLFALIFFWTPVHFWALALMIQDDYRAVGVPMLPVVLGERATVIQIALYALLTALISLMPLLLGELGLLYLAASLLLNALLLLKSLALYRRPERRTAVSLYKYSMLYLALLFAAMAVDRAV.

The segment at 1 to 338 is COX15/CtaA; that stretch reads MKTPAWSRLA…DYLALTKPRV (338 aa). 17 consecutive transmembrane segments (helical) span residues 10–30, 67–87, 99–119, 139–159, 167–187, 220–240, 252–272, 277–297, 338–357, 362–384, 411–431, 432–452, 460–480, 488–508, 530–550, 555–575, and 584–604; these read AGYA…GAYV, ATSG…LRAF, LALF…LFGW, TYFL…GGPL, VGLA…SGAV, VLHP…GYLV, LAQG…INVA, VWMQ…FVFL, VISL…AKGW, VFLA…NMVV, LLFA…GANL, LAAT…TLYL, IVIG…AVTG, YLFA…ALMI, VIQI…PLLL, LLYL…SLAL, and AVSL…AMAV. The interval 339-608 is protoheme IX prenyltransferase; it reads ISLLLFTALF…FAAMAVDRAV (270 aa).

This sequence in the N-terminal section; belongs to the COX15/CtaA family. The protein in the C-terminal section; belongs to the UbiA prenyltransferase family. Protoheme IX farnesyltransferase subfamily.

It localises to the cell inner membrane. The catalysed reaction is heme b + (2E,6E)-farnesyl diphosphate + H2O = Fe(II)-heme o + diphosphate. Its pathway is porphyrin-containing compound metabolism; heme O biosynthesis; heme O from protoheme: step 1/1. In terms of biological role, converts heme B (protoheme IX) to heme O by substitution of the vinyl group on carbon 2 of heme B porphyrin ring with a hydroxyethyl farnesyl side group. The sequence is that of Protoheme IX farnesyltransferase (ctaB) from Thermus thermophilus (strain ATCC 27634 / DSM 579 / HB8).